Consider the following 205-residue polypeptide: MTGNELEIELKEPLLPVEEYLAAGVHIGTQQKSKDMMKFIYRVRGDGLYILDIQATDERIKTAAKFLSQYEPSKILVVTSRQYGQYPAKKFADAIGGMAVVGRFIPGMLTNQRLHGLNKYIEPDVVVVTDPIGDSQTIAEAVQVGIPIVALCDTNNMTKYVDVVIPTNNKGRKALSVIYYLLTKELLRLRGVATSLTPEDFETEL.

The protein belongs to the universal ribosomal protein uS2 family.

In Methanoculleus marisnigri (strain ATCC 35101 / DSM 1498 / JR1), this protein is Small ribosomal subunit protein uS2.